The sequence spans 539 residues: Chaperonin GroEL 1 (539 aa).

ATP contacts are provided by residues Thr30–Pro33, Lys51, Asp87–Thr91, Gly415, Asn480–Ala482, and Asp496.

This sequence belongs to the chaperonin (HSP60) family. In terms of assembly, forms a cylinder of 14 subunits composed of two heptameric rings stacked back-to-back. Interacts with the co-chaperonin GroES.

The protein localises to the cytoplasm. It catalyses the reaction ATP + H2O + a folded polypeptide = ADP + phosphate + an unfolded polypeptide.. In terms of biological role, together with its co-chaperonin GroES, plays an essential role in assisting protein folding. The GroEL-GroES system forms a nano-cage that allows encapsulation of the non-native substrate proteins and provides a physical environment optimized to promote and accelerate protein folding. This Erythrobacter litoralis (strain HTCC2594) protein is Chaperonin GroEL 1.